A 138-amino-acid polypeptide reads, in one-letter code: Vesicle transport protein GOT1B (138 aa).

The residue at position 1 (methionine 1) is an N-acetylmethionine. The Cytoplasmic segment spans residues 1 to 9; sequence MISLTDTQK. A helical membrane pass occupies residues 10–30; it reads IGMGLTGFGVFFLFFGMILFF. At 31 to 32 the chain is on the lumenal side; the sequence is DK. The chain crosses the membrane as a helical span at residues 33–53; the sequence is ALLAIGNVLFVAGLAFVIGLE. Over 54 to 68 the chain is Cytoplasmic; it reads RTFRFFFQKHKMKAT. The helical transmembrane segment at 69 to 89 threads the bilayer; that stretch reads GFFLGGVFVVLIGWPLIGMIF. Position 90 (glutamate 90) is a topological domain, lumenal. The chain crosses the membrane as a helical span at residues 91–109; it reads IYGFFLLFRGFFPVVVGFI. The Cytoplasmic portion of the chain corresponds to 110–138; it reads RRVPVLGSLLNLPGIRSFVDKVGESNNMV.

Belongs to the GOT1 family.

It is found in the golgi apparatus membrane. In terms of biological role, may be involved in fusion of ER-derived transport vesicles with the Golgi complex. In Bos taurus (Bovine), this protein is Vesicle transport protein GOT1B.